The sequence spans 404 residues: Protein ARK2N (404 aa).

Basic and acidic residues-rich tracts occupy residues 1–12 (MKMEEAVGKVEE) and 23–32 (SEQETAKEED). Disordered stretches follow at residues 1–50 (MKME…ADST) and 63–255 (RRDS…TNSD). Residue serine 66 is modified to Phosphoserine. Serine 67 is modified (phosphoserine; by AMPK). A compositionally biased stretch (polar residues) spans 87-121 (SDSSNHCMLSPSSSGHLADSDTLSSAEENEPSQAE). Phosphoserine is present on residues serine 143, serine 145, and serine 147. The span at 169–187 (AKVKGHRSQKHKERIRLLR) shows a compositional bias: basic residues. Residues 175–200 (RSQKHKERIRLLRQKREAAARKKYNL) adopt a coiled-coil conformation. The required for interaction with CSNK2B stretch occupies residues 202-226 (QDSSTSDSDLTCDSSTSSSDDDEEV). A compositionally biased stretch (low complexity) spans 203-219 (DSSTSDSDLTCDSSTSS). 3 positions are modified to phosphoserine: serine 327, serine 328, and serine 330. Residue arginine 347 is modified to Omega-N-methylarginine. Lysine 358 participates in a covalent cross-link: Glycyl lysine isopeptide (Lys-Gly) (interchain with G-Cter in SUMO2).

In terms of assembly, interacts with CSNK2B (via KSSR). Interacts with JUN; the interaction is mediated by CSNK2B. Post-translationally, phosphorylated at Ser-67 by AMPK. In skeletal muscle, phosphorylation is induced by exercise and seems to increase muscle contractile function. In terms of tissue distribution, expressed in skeletal muscle.

The protein localises to the nucleus. In terms of biological role, AMPK substrate important for exercise capacity and skeletal muscle function. Required for normal contraction-induced signaling. Its function is as follows. (Microbial infection) Upon Epstein-Barr virus (EBV) infection, suppresses viral BZLF1 expression and subsequent EBV reactivation by interacting with JUN and inhibiting its transcriptional activator activity on BZLF1 Z promoter. The polypeptide is Protein ARK2N (Homo sapiens (Human)).